A 149-amino-acid polypeptide reads, in one-letter code: Calmodulin (149 aa).

EF-hand domains are found at residues 8 to 43 (EQIA…LGQN), 44 to 79 (PTEA…KMKD), 81 to 116 (DSEE…LGEK), and 117 to 149 (LTDE…MMSK). Ca(2+)-binding residues include aspartate 21, aspartate 23, aspartate 25, threonine 27, glutamate 32, aspartate 57, aspartate 59, asparagine 61, threonine 63, glutamate 68, aspartate 94, aspartate 96, asparagine 98, glutamate 105, aspartate 130, aspartate 132, aspartate 134, glutamine 136, and glutamate 141.

Belongs to the calmodulin family.

Calmodulin mediates the control of a large number of enzymes, ion channels and other proteins by Ca(2+). Among the enzymes to be stimulated by the calmodulin-Ca(2+) complex are a number of protein kinases and phosphatases. This Globisporangium splendens (Leaf rot fungus) protein is Calmodulin.